Here is a 431-residue protein sequence, read N- to C-terminus: 3-phosphoshikimate 1-carboxyvinyltransferase (431 aa).

3-phosphoshikimate-binding residues include Lys22, Ser23, and Arg27. Lys22 lines the phosphoenolpyruvate pocket. Residues Gly94 and Arg122 each coordinate phosphoenolpyruvate. The 3-phosphoshikimate site is built by Ser167, Gln169, Asp314, and Lys341. Gln169 is a binding site for phosphoenolpyruvate. Residue Asp314 is the Proton acceptor of the active site. Arg345 and Arg391 together coordinate phosphoenolpyruvate.

The protein belongs to the EPSP synthase family. Monomer.

The protein resides in the cytoplasm. The catalysed reaction is 3-phosphoshikimate + phosphoenolpyruvate = 5-O-(1-carboxyvinyl)-3-phosphoshikimate + phosphate. The protein operates within metabolic intermediate biosynthesis; chorismate biosynthesis; chorismate from D-erythrose 4-phosphate and phosphoenolpyruvate: step 6/7. Catalyzes the transfer of the enolpyruvyl moiety of phosphoenolpyruvate (PEP) to the 5-hydroxyl of shikimate-3-phosphate (S3P) to produce enolpyruvyl shikimate-3-phosphate and inorganic phosphate. In Leuconostoc citreum (strain KM20), this protein is 3-phosphoshikimate 1-carboxyvinyltransferase.